Here is a 496-residue protein sequence, read N- to C-terminus: Guanosine-5'-triphosphate,3'-diphosphate pyrophosphatase (496 aa).

The protein belongs to the GppA/Ppx family. GppA subfamily.

The catalysed reaction is guanosine 3'-diphosphate 5'-triphosphate + H2O = guanosine 3',5'-bis(diphosphate) + phosphate + H(+). Its pathway is purine metabolism; ppGpp biosynthesis; ppGpp from GTP: step 2/2. In terms of biological role, catalyzes the conversion of pppGpp to ppGpp. Guanosine pentaphosphate (pppGpp) is a cytoplasmic signaling molecule which together with ppGpp controls the 'stringent response', an adaptive process that allows bacteria to respond to amino acid starvation, resulting in the coordinated regulation of numerous cellular activities. The protein is Guanosine-5'-triphosphate,3'-diphosphate pyrophosphatase of Aeromonas hydrophila subsp. hydrophila (strain ATCC 7966 / DSM 30187 / BCRC 13018 / CCUG 14551 / JCM 1027 / KCTC 2358 / NCIMB 9240 / NCTC 8049).